A 376-amino-acid polypeptide reads, in one-letter code: Cytochrome b (376 aa).

4 helical membrane-spanning segments follow: residues 28-48, 72-94, 107-127, and 169-189; these read YGFL…FLAS, WCFR…LHIL, SWIS…IGYV, and FFVL…IHIF. Residues His78 and His92 each coordinate heme b. Heme b is bound by residues His173 and His187. Residue His192 coordinates a ubiquinone. Transmembrane regions (helical) follow at residues 214–234, 274–294, 317–337, and 340–360; these read LLSL…IQSI, IPSK…LFLL, VPII…CPLP, and IFIL…LFSL.

It belongs to the cytochrome b family. The main subunits of complex b-c1 are: cytochrome b, cytochrome c1 and the Rieske protein. Requires heme b as cofactor.

It localises to the mitochondrion inner membrane. Component of the ubiquinol-cytochrome c reductase complex (complex III or cytochrome b-c1 complex) that is part of the mitochondrial respiratory chain. The b-c1 complex mediates electron transfer from ubiquinol to cytochrome c. Contributes to the generation of a proton gradient across the mitochondrial membrane that is then used for ATP synthesis. The sequence is that of Cytochrome b (MT-CYB) from Plasmodium berghei.